The sequence spans 48 residues: Large ribosomal subunit protein bL34 (48 aa).

The protein belongs to the bacterial ribosomal protein bL34 family.

The protein is Large ribosomal subunit protein bL34 (rpmH) of Mycoplasma pneumoniae (strain ATCC 29342 / M129 / Subtype 1) (Mycoplasmoides pneumoniae).